Here is a 325-residue protein sequence, read N- to C-terminus: NADH-quinone oxidoreductase subunit H (325 aa).

9 helical membrane-spanning segments follow: residues 11 to 31, 50 to 69, 81 to 101, 114 to 134, 154 to 174, 186 to 206, 237 to 257, 265 to 285, and 304 to 324; these read ILLS…CGAF, NRVG…KMFF, VIFT…FAIV, IGIL…LFAG, VSYE…AGSF, LWNV…GVAV, FFVG…TLFF, LPPF…FILI, and VCLP…LWQA.

The protein belongs to the complex I subunit 1 family. In terms of assembly, NDH-1 is composed of 13 different subunits. Subunits NuoA, H, J, K, L, M, N constitute the membrane sector of the complex.

Its subcellular location is the cell inner membrane. The enzyme catalyses a quinone + NADH + 5 H(+)(in) = a quinol + NAD(+) + 4 H(+)(out). NDH-1 shuttles electrons from NADH, via FMN and iron-sulfur (Fe-S) centers, to quinones in the respiratory chain. The immediate electron acceptor for the enzyme in this species is believed to be ubiquinone. Couples the redox reaction to proton translocation (for every two electrons transferred, four hydrogen ions are translocated across the cytoplasmic membrane), and thus conserves the redox energy in a proton gradient. This subunit may bind ubiquinone. The protein is NADH-quinone oxidoreductase subunit H of Salmonella agona (strain SL483).